A 221-amino-acid chain; its full sequence is Transcription factor bHLH148 (221 aa).

2 disordered regions span residues 1–45 (MASL…GEIH) and 70–89 (LNSSASTSSSPTAQKRGKAV). Low complexity-rich tracts occupy residues 26-41 (SASSAASSRSSASSVS) and 72-82 (SSASTSSSPTA). A bHLH domain is found at 148-197 (KRRVSVLRLNKKSIPDVNRKVRVLGRLVPGCGKQSVPVILEEATDYIQAL).

Homodimer. Interacts with PRE3. Binds to RSA1.

Its subcellular location is the nucleus. Its function is as follows. bHLH transcription factor that binds DNA on specific sequence 5'-CANNTG-3' in target gene promoters. Negatively regulates brassinosteroid signaling. Together with BHLH148/RITF1, regulates the transcription of several genes involved in the detoxification of reactive oxygen species (ROS) generated by salt (NaCl) stress. Confers tolerance to salt and to the oxidative stress-inducing reagents hydrogen peroxide H(2)O(2) and methyl viologen (MV). This is Transcription factor bHLH148 from Arabidopsis thaliana (Mouse-ear cress).